We begin with the raw amino-acid sequence, 311 residues long: Bifunctional protein FolD (311 aa).

Residues 180 to 182, Ser209, and Ile250 contribute to the NADP(+) site; that span reads GRS.

This sequence belongs to the tetrahydrofolate dehydrogenase/cyclohydrolase family. Homodimer.

It carries out the reaction (6R)-5,10-methylene-5,6,7,8-tetrahydrofolate + NADP(+) = (6R)-5,10-methenyltetrahydrofolate + NADPH. The enzyme catalyses (6R)-5,10-methenyltetrahydrofolate + H2O = (6R)-10-formyltetrahydrofolate + H(+). Its pathway is one-carbon metabolism; tetrahydrofolate interconversion. Catalyzes the oxidation of 5,10-methylenetetrahydrofolate to 5,10-methenyltetrahydrofolate and then the hydrolysis of 5,10-methenyltetrahydrofolate to 10-formyltetrahydrofolate. This is Bifunctional protein FolD from Haloquadratum walsbyi (strain DSM 16790 / HBSQ001).